The following is a 350-amino-acid chain: Homeobox-leucine zipper protein HOX5 (350 aa).

Residues 83 to 142 constitute a DNA-binding region (homeobox); the sequence is APEKKRRLTAEQVQMLERSFEEENKLEPERKTELARRLGMAPRQVAVWFQNRRARWKTKQ. The interval 141 to 185 is leucine-zipper; the sequence is KQLEHDFDRLKAAYDALAADHHALLSDNDRLRAQVISLTEKLQDK. The interval 180–254 is disordered; that stretch reads EKLQDKETSP…TNDDGDGGGA (75 aa). The span at 188-198 shows a compositional bias: low complexity; sequence SPSSATITTAA.

The protein belongs to the HD-ZIP homeobox family. Class I subfamily. Homodimer. May form a heterodimer with HOX4. In terms of tissue distribution, expressed in seedlings, roots, leaves, nodes, internodes, flowers and embryo.

The protein resides in the nucleus. Its function is as follows. Probable transcription activator that binds to the DNA sequence 5'-CAAT[AT]ATTG-3'. The protein is Homeobox-leucine zipper protein HOX5 (HOX5) of Oryza sativa subsp. indica (Rice).